The following is a 424-amino-acid chain: MASLLGTSSSAIWASPSLSSPSSKPSSSPICFRPGKLFGSKLNAGIQIRPKKNRSRYHVSVMNVATEINSTEQVVGKFDSKKSARPVYPFAAIVGQDEMKLCLLLNVIDPKIGGVMIMGDRGTGKSTTVRSLVDLLPEINVVAGDPYNSDPIDPEFMGVEVRERVEKGEQVPVIATKINMVDLPLGATEDRVCGTIDIEKALTEGVKAFEPGLLAKANRGILYVDEVNLLDDHLVDVLLDSAASGWNTVEREGISISHPARFILIGSGNPEEGELRPQLLDRFGMHAQVGTVRDADLRVKIVEERARFDSNPKDFRDTYKTEQDKLQDQISTARANLSSVQIDRELKVKISRVCSELNVDGLRGDIVTNRAAKALAALKGKDRVTPDDVATVIPNCLRHRLRKDPLESIDSGVLVSEKFAEIFS.

Residues 1–60 (MASLLGTSSSAIWASPSLSSPSSKPSSSPICFRPGKLFGSKLNAGIQIRPKKNRSRYHVS) constitute a chloroplast transit peptide. Position 61 is an N-acetylvaline (V61). Disulfide bonds link C102–C193 and C354–C396. 119–126 (GDRGTGKS) is an ATP binding site. The residue at position 355 (S355) is a Phosphoserine.

Belongs to the Mg-chelatase subunits D/I family. In terms of assembly, the magnesium chelatase complex is a heterotrimer consisting of subunits CHLI, CHLD and CHLH. Interacts with CHLH and CHLD.

The protein resides in the plastid. It localises to the chloroplast. The catalysed reaction is protoporphyrin IX + Mg(2+) + ATP + H2O = Mg-protoporphyrin IX + ADP + phosphate + 3 H(+). It functions in the pathway porphyrin-containing compound metabolism; chlorophyll biosynthesis. Its activity is regulated as follows. Redox regulation; active in reducing conditions, inactive in oxidizing conditions. Thioredoxins f and m mediate the reversible reductive activation of oxidized CHLI1. Its function is as follows. Involved in chlorophyll biosynthesis. Catalyzes the insertion of magnesium ion into protoporphyrin IX to yield Mg-protoporphyrin IX. The magnesium-chelatase is a complex of three subunits, CHLI, CHLD and CHLH. The reaction takes place in two steps, with an ATP-dependent activation followed by an ATP-dependent chelation step. Possesses high affinity for ATP and may play a major role in chlorophyll biosynthesis. Does not bind abscisic acid (ABA), but is a positive regulator of ABA signaling. May be involved in ABA signaling in the control of stomatal aperture, but does not seem to have an effect on ABA-induced gene expression. This is Magnesium-chelatase subunit ChlI-1, chloroplastic (CHLI1) from Arabidopsis thaliana (Mouse-ear cress).